We begin with the raw amino-acid sequence, 299 residues long: ATP phosphoribosyltransferase (299 aa).

The protein belongs to the ATP phosphoribosyltransferase family. Long subfamily. In terms of assembly, equilibrium between an active dimeric form, an inactive hexameric form and higher aggregates. Interconversion between the various forms is largely reversible and is influenced by the natural substrates and inhibitors of the enzyme. Requires Mg(2+) as cofactor.

It is found in the cytoplasm. It catalyses the reaction 1-(5-phospho-beta-D-ribosyl)-ATP + diphosphate = 5-phospho-alpha-D-ribose 1-diphosphate + ATP. It functions in the pathway amino-acid biosynthesis; L-histidine biosynthesis; L-histidine from 5-phospho-alpha-D-ribose 1-diphosphate: step 1/9. Its activity is regulated as follows. Feedback inhibited by histidine. Functionally, catalyzes the condensation of ATP and 5-phosphoribose 1-diphosphate to form N'-(5'-phosphoribosyl)-ATP (PR-ATP). Has a crucial role in the pathway because the rate of histidine biosynthesis seems to be controlled primarily by regulation of HisG enzymatic activity. The chain is ATP phosphoribosyltransferase from Pectobacterium carotovorum subsp. carotovorum (strain PC1).